Consider the following 369-residue polypeptide: H-2 class I histocompatibility antigen, K-K alpha chain (369 aa).

Residues 1–21 (MAPCMLLLLLAAALAPTQTRA) form the signal peptide. Residues 22–111 (GPHSLRYFHT…ALRYYNQSAG (90 aa)) are alpha-1. The Extracellular portion of the chain corresponds to 22 to 305 (GPHSLRYFHT…EPPPSTVSNT (284 aa)). A glycan (N-linked (GlcNAc...) asparagine) is linked at Asn-107. The segment at 112–203 (GSHTFQRMYG…QLGNATLPRT (92 aa)) is alpha-2. An intrachain disulfide couples Cys-122 to Cys-185. Residue Asn-197 is glycosylated (N-linked (GlcNAc...) asparagine). The segment at 204–295 (DSPKAHVTRH…GLPEPLTLRW (92 aa)) is alpha-3. Residues 206–294 (PKAHVTRHSR…QGLPEPLTLR (89 aa)) enclose the Ig-like C1-type domain. The cysteines at positions 224 and 280 are disulfide-linked. The segment at 296–305 (EPPPSTVSNT) is connecting peptide. Residues 306–328 (VIIAVLVVLGAAIVTGAVVAFVM) traverse the membrane as a helical segment. Over 329 to 369 (KMRRRNTGGKGGDYALAPGSQTSDLSLPDCKVMVHDPHSLA) the chain is Cytoplasmic. Phosphoserine occurs at positions 351 and 354.

The protein belongs to the MHC class I family. Heterodimer of an alpha chain and a beta chain (beta-2-microglobulin).

It is found in the membrane. Involved in the presentation of foreign antigens to the immune system. This is H-2 class I histocompatibility antigen, K-K alpha chain (H2-K1) from Mus musculus (Mouse).